Consider the following 595-residue polypeptide: E3 ubiquitin-protein ligase synoviolin B (595 aa).

Residues 1–19 (MTGASLALTASVVAHAYYL) form a helical membrane-spanning segment. Residues 20–35 (KNQFYPTVVYLTKSSP) are Lumenal-facing. Residues 36–56 (SMAILYIQAFVLVFLLGKFMG) traverse the membrane as a helical segment. Topologically, residues 57-92 (KVFFGQLRAAEMEHLLERSWYAVTETCLAFTVFRDD) are cytoplasmic. The chain crosses the membrane as a helical span at residues 93-113 (FSPRFVALFTLLLFLKCFHWL). The Lumenal segment spans residues 114–129 (AEDRVDFMERSPNISW). Residues 130-150 (LFHFRILALMLLLGVLDAFFV) form a helical membrane-spanning segment. At 151-163 (SHAYNSLVTRGAS) the chain is on the cytoplasmic side. Residues 164–184 (VQLVFGFEYAILMTMILAVFI) form a helical membrane-spanning segment. The Lumenal segment spans residues 185–218 (KYILHSVDLQSENPWDNKAVYMLYTELFTGFIKV). A helical transmembrane segment spans residues 219–239 (LLYMAFMTIMVKVHTFPLFAI). An interaction with p53/TP53 region spans residues 230–264 (KVHTFPLFAIRPMYLAMRQFKKAVTDAVMSRRAIR). The Cytoplasmic segment spans residues 240-595 (RPMYLAMRQF…LQKLETTDSQ (356 aa)). Residues cysteine 285, cysteine 288, cysteine 301, histidine 303, histidine 306, cysteine 309, cysteine 320, and cysteine 323 each coordinate Zn(2+). Residues 285-324 (CIICREEMVSGAKRLPCNHIFHTSCLRSWFQRQQTCPTCR) form an RING-type; atypical zinc finger. A compositionally biased stretch (low complexity) spans 335–353 (QPQTPAEQQNQHQAQQQPT). Disordered regions lie at residues 335–370 (QPQTPAEQQNQHQAQQQPTPVVPPQPNFPPGMLPPF) and 386–426 (PVPG…PGAA). The segment covering 354–370 (PVVPPQPNFPPGMLPPF) has biased composition (pro residues). A compositionally biased stretch (low complexity) spans 390–408 (APVGNPPDEANPGSSSGSS). Residues 463–494 (EELRAMEGHERQNLEARLQCLQNIHTLLDAAM) adopt a coiled-coil conformation. The interval 509–595 (PPQPPVSSSS…LQKLETTDSQ (87 aa)) is disordered. Residues 514–552 (VSSSSSSSASASTEPTTSSVSEPVIDTSSIVTTDSSQQS) show a composition bias toward low complexity.

It belongs to the HRD1 family. In terms of assembly, homodimer.

It localises to the endoplasmic reticulum membrane. The enzyme catalyses S-ubiquitinyl-[E2 ubiquitin-conjugating enzyme]-L-cysteine + [acceptor protein]-L-lysine = [E2 ubiquitin-conjugating enzyme]-L-cysteine + N(6)-ubiquitinyl-[acceptor protein]-L-lysine.. It participates in protein modification; protein ubiquitination. Its function is as follows. E3 ubiquitin-protein ligase which accepts ubiquitin specifically from endoplasmic reticulum-associated UBC7 E2 ligase and transfers it to substrates, promoting their degradation. Component of the endoplasmic reticulum quality control (ERQC) system also called ER-associated degradation (ERAD) involved in ubiquitin-dependent degradation of misfolded endoplasmic reticulum proteins. Also promotes the degradation of normal but naturally short-lived proteins. Protects cells from ER stress-induced apoptosis. Sequesters p53 in the cytoplasm and promotes its degradation, thereby negatively regulating its biological function in transcription, cell cycle regulation and apoptosis. The protein is E3 ubiquitin-protein ligase synoviolin B (syvn1-b) of Xenopus laevis (African clawed frog).